The primary structure comprises 445 residues: Inositol-pentakisphosphate 2-kinase IPK1 (445 aa).

ATP contacts are provided by residues 19 to 22 (GAAN) and Arg-40. A substrate-binding site is contributed by Arg-127. Residues 144–146 (SDH) and 162–164 (EIK) contribute to the ATP site. An EXKPK motif motif is present at residues 162–166 (EIKAK). Residues Lys-166, Lys-196, and Asn-234 each coordinate substrate. Position 237 (Arg-237) interacts with ATP. Positions 312, 322, 325, and 341 each coordinate Zn(2+). Position 363 (Asp-363) interacts with substrate. Asp-402 contacts ATP. Residues Lys-406, Lys-410, and Tyr-414 each contribute to the substrate site.

It belongs to the IPK1 type 2 family. The cofactor is Zn(2+).

It carries out the reaction 1D-myo-inositol 1,3,4,5,6-pentakisphosphate + ATP = 1D-myo-inositol hexakisphosphate + ADP + H(+). Phosphorylates Ins(1,3,4,5,6)P5 at position 2 to form Ins(1,2,3,4,5,6)P6 (InsP6 or phytate). Phytate is a regulator of intracellular signaling, a highly abundant animal antinutrient, and a phosphate store in plant seeds. Also phosphorylates Ins(1,3,4,6)P4 and Ins(1,4,5,6)P4 to produce Ins(1,2,3,4,6)P5 and Ins(1,2,4,5,6)P5. This Oryza sativa subsp. indica (Rice) protein is Inositol-pentakisphosphate 2-kinase IPK1.